Reading from the N-terminus, the 624-residue chain is Kelch-like ECH-associated protein 1 (624 aa).

Residue Cys-38 is modified to S-(2-succinyl)cysteine. The BTB domain maps to Cys-77 to Glu-149. Residue Arg-135 forms an N5-[4-(S-L-cysteinyl)-5-methyl-1H-imidazol-2-yl]-L-ornithine (Arg-Cys) (interchain with C-151 in KEAP1) linkage. S-(2-succinyl)cysteine occurs at positions 151 and 241. At Cys-151 the chain carries S-(2,3-dicarboxypropyl)cysteine; alternate. The residue at position 151 (Cys-151) is an S-nitrosocysteine; alternate. Cys-151 participates in a covalent cross-link: N5-[4-(S-L-cysteinyl)-5-methyl-1H-imidazol-2-yl]-L-ornithine (Cys-Arg) (interchain with R-135 in KEAP1). A BACK domain is found at Ala-184 to Gln-286. Cys-257 and Cys-273 each carry S-(2,3-dicarboxypropyl)cysteine. Residues Cys-288 and Cys-319 each carry the S-(2-succinyl)cysteine modification. Cys-288 carries the post-translational modification S-(2,3-dicarboxypropyl)cysteine; alternate. 6 Kelch repeats span residues Leu-327 to Gly-372, Leu-373 to Gly-423, His-424 to Arg-470, Leu-471 to Ser-517, Ile-519 to Gly-564, and Arg-565 to Glu-611. At Cys-434 the chain carries S-cGMP-cysteine. Cys-613 bears the S-(2-succinyl)cysteine mark.

It belongs to the KEAP1 family. Component of the BCR(KEAP1) E3 ubiquitin ligase complex, at least composed of 2 molecules of CUL3, 2 molecules of KEAP1, and RBX1. Interacts with NFE2L2/NRF2; the interaction is direct. Forms a ternary complex with NFE2L2/NRF2 and PGAM5. Interacts with (phosphorylated) SQSTM1/p62; the interaction is direct and inactivates the BCR(KEAP1) complex by sequestering it in inclusion bodies, promoting its degradation. Interacts with NFE2L1. Interacts with BPTF and PTMA. Interacts with MAP1LC3B. Interacts indirectly with ENC1. Interacts with SESN1 and SESN2. Interacts with HSP90AA1 and HSP90AB1. Interacts with PGCKA1; this interaction prevents the ubiquitination of KEAP1 by TRIM25, thus protecting KEAP1 from degradation. Non-enzymatic covalent modifications of reactive cysteines by electrophile metabolites inactivate the BCR(KEAP1) complex. Accumulation of fumarate promotes the formation of cysteine S-succination (S-(2-succinyl)cysteine), leading to inactivate the BCR(KEAP1) complex and promote NFE2L2/NRF2 nuclear accumulation and activation. Nitric oxide-dependent 8-Nitro-cGMP formation promotes cysteine guanylation (S-cGMP-cysteine), leading to NFE2L2/NRF2 nuclear accumulation and activation. Itaconate, an anti-inflammatory metabolite generated in response to lipopolysaccharide, alkylates cysteines, activating NFE2L2/NRF2. Methylglyoxal, a reactive metabolite that accumulates when the glycolytic enzyme PGK1 is inhibited, promotes formation of a methylimidazole cross-link between proximal Cys-151 and Arg-135 on another KEAP1 molecule, resulting in an inactive dimer that inactivates the BCR(KEAP1) complex. Post-translationally, degraded via a proteasomal-independent process during selective autophagy: interaction with phosphorylated SQSTM1/p62 sequesters KEAP1 in inclusion bodies, leading to its degradation. In terms of processing, auto-ubiquitinated by the BCR(KEAP1) complex. Quinone-induced oxidative stress, but not sulforaphane, increases its ubiquitination. Ubiquitination and subsequent degradation is most pronounced following prolonged exposure of cells to oxidative stress, particularly in glutathione-deficient cells that are highly susceptible to oxidative stress. Deubiquitinated by USP25; leading to stabilization. Ubiquitinated by TRIM25; leading to degradation upon ER stress.

It is found in the cytoplasm. The protein resides in the nucleus. It functions in the pathway protein modification; protein ubiquitination. Its activity is regulated as follows. Ubiquitin ligase activity of the BCR(KEAP1) complex is inhibited by oxidative stress and electrophile metabolites such as sulforaphane. Electrophile metabolites react with reactive cysteine residues in KEAP1 and trigger non-enzymatic covalent modifications of these cysteine residues, leading to inactivate the ubiquitin ligase activity of the BCR(KEAP1) complex. Selective autophagy also inactivates the BCR(KEAP1) complex via interaction between KEAP1 and SQSTM1/p62, which sequesters the complex in inclusion bodies and promotes its degradation. Its function is as follows. Substrate-specific adapter of a BCR (BTB-CUL3-RBX1) E3 ubiquitin ligase complex that regulates the response to oxidative stress by targeting NFE2L2/NRF2 for ubiquitination. KEAP1 acts as a key sensor of oxidative and electrophilic stress: in normal conditions, the BCR(KEAP1) complex mediates ubiquitination and degradation of NFE2L2/NRF2, a transcription factor regulating expression of many cytoprotective genes. In response to oxidative stress, different electrophile metabolites trigger non-enzymatic covalent modifications of highly reactive cysteine residues in KEAP1, leading to inactivate the ubiquitin ligase activity of the BCR(KEAP1) complex, promoting NFE2L2/NRF2 nuclear accumulation and expression of phase II detoxifying enzymes. In response to selective autophagy, KEAP1 is sequestered in inclusion bodies following its interaction with SQSTM1/p62, leading to inactivation of the BCR(KEAP1) complex and activation of NFE2L2/NRF2. The BCR(KEAP1) complex also mediates ubiquitination of SQSTM1/p62, increasing SQSTM1/p62 sequestering activity and degradation. The BCR(KEAP1) complex also targets BPTF and PGAM5 for ubiquitination and degradation by the proteasome. This Rattus norvegicus (Rat) protein is Kelch-like ECH-associated protein 1.